The sequence spans 64 residues: IKDGYIVDDVNCTYFCGRNAYCNEECTKLKGESGYCQWASPYGNACYCYKLPDHVRTKGPGRCR.

Positions 2-64 (KDGYIVDDVN…VRTKGPGRCR (63 aa)) constitute an LCN-type CS-alpha/beta domain. Disulfide bonds link cysteine 12/cysteine 63, cysteine 16/cysteine 36, cysteine 22/cysteine 46, and cysteine 26/cysteine 48. Arginine 64 bears the Arginine amide mark.

The protein belongs to the long (4 C-C) scorpion toxin superfamily. Sodium channel inhibitor family. Alpha subfamily. As to expression, expressed by the venom gland.

It is found in the secreted. Functionally, alpha toxins bind voltage-independently at site-3 of sodium channels (Nav) and inhibit the inactivation of the activated channels, thereby blocking neuronal transmission. The dissociation is voltage-dependent. Is active on mammals and competes for alpha-toxins binding on both mammalian and cockroach sodium channels. In Leiurus hebraeus (Hebrew deathstalker scorpion), this protein is Alpha-mammal toxin Lqh2.